The chain runs to 417 residues: NADH-quinone oxidoreductase subunit D (417 aa).

It belongs to the complex I 49 kDa subunit family. As to quaternary structure, NDH-1 is composed of 14 different subunits. Subunits NuoB, C, D, E, F, and G constitute the peripheral sector of the complex.

It is found in the cell inner membrane. The catalysed reaction is a quinone + NADH + 5 H(+)(in) = a quinol + NAD(+) + 4 H(+)(out). Its function is as follows. NDH-1 shuttles electrons from NADH, via FMN and iron-sulfur (Fe-S) centers, to quinones in the respiratory chain. The immediate electron acceptor for the enzyme in this species is believed to be ubiquinone. Couples the redox reaction to proton translocation (for every two electrons transferred, four hydrogen ions are translocated across the cytoplasmic membrane), and thus conserves the redox energy in a proton gradient. The polypeptide is NADH-quinone oxidoreductase subunit D (Nitrosomonas europaea (strain ATCC 19718 / CIP 103999 / KCTC 2705 / NBRC 14298)).